The chain runs to 96 residues: MEQAPEDQGPQREPYNEWTLELLEELKSEAVRHFPRLWLHSLGQHIYETYGDTWAGVEAIIRILQQLLFIHFRIGCQHSRIGITRQRRARNGASRS.

The tract at residues 1–42 (MEQAPEDQGPQREPYNEWTLELLEELKSEAVRHFPRLWLHSL) is homooligomerization. Ser79, Ser94, and Ser96 each carry phosphoserine; by host.

This sequence belongs to the HIV-1 VPR protein family. In terms of assembly, homooligomer, may form homodimer. Interacts with p6-gag region of the Pr55 Gag precursor protein through a (Leu-X-X)4 motif near the C-terminus of the P6gag protein. Interacts with host UNG. May interact with host RAD23A/HHR23A. Interacts with host VPRBP/DCAF1, leading to hijack the CUL4A-RBX1-DDB1-DCAF1/VPRBP complex, mediating ubiquitination of host proteins such as TERT and ZGPAT and arrest of the cell cycle in G2 phase. Post-translationally, phosphorylated on several residues by host. These phosphorylations regulate VPR activity for the nuclear import of the HIV-1 pre-integration complex.

It localises to the virion. It is found in the host nucleus. The protein localises to the host extracellular space. Functionally, during virus replication, may deplete host UNG protein, and incude G2-M cell cycle arrest. Acts by targeting specific host proteins for degradation by the 26S proteasome, through association with the cellular CUL4A-DDB1 E3 ligase complex by direct interaction with host VPRPB/DCAF-1. Cell cycle arrest reportedly occurs within hours of infection and is not blocked by antiviral agents, suggesting that it is initiated by the VPR carried into the virion. Additionally, VPR induces apoptosis in a cell cycle dependent manner suggesting that these two effects are mechanistically linked. Detected in the serum and cerebrospinal fluid of AIDS patient, VPR may also induce cell death to bystander cells. Its function is as follows. During virus entry, plays a role in the transport of the viral pre-integration (PIC) complex to the host nucleus. This function is crucial for viral infection of non-dividing macrophages. May act directly at the nuclear pore complex, by binding nucleoporins phenylalanine-glycine (FG)-repeat regions. In Human immunodeficiency virus type 1 group M subtype B (isolate RF/HAT3) (HIV-1), this protein is Protein Vpr.